Consider the following 141-residue polypeptide: Hemoglobin subunit alpha (141 aa).

In terms of domain architecture, Globin spans 1-141 (VLSGDDKSNL…VSTVLTSKYR (141 aa)). Phosphoserine is present on Ser-3. 2 positions are modified to N6-succinyllysine: Lys-7 and Lys-11. Lys-16 bears the N6-acetyllysine; alternate mark. The residue at position 16 (Lys-16) is an N6-succinyllysine; alternate. Tyr-24 bears the Phosphotyrosine mark. Lys-40 carries the N6-succinyllysine modification. A Phosphoserine modification is found at Ser-49. Residue His-58 coordinates O2. His-87 contacts heme b. Residue Ser-102 is modified to Phosphoserine. Thr-108 carries the phosphothreonine modification. A phosphoserine mark is found at Ser-124 and Ser-131. Phosphothreonine occurs at positions 134 and 137. A Phosphoserine modification is found at Ser-138.

The protein belongs to the globin family. As to quaternary structure, heterotetramer of two alpha chains and two beta chains. In terms of tissue distribution, red blood cells.

In terms of biological role, involved in oxygen transport from the lung to the various peripheral tissues. The sequence is that of Hemoglobin subunit alpha from Microtus pennsylvanicus (Meadow vole).